We begin with the raw amino-acid sequence, 162 residues long: MNDRELDLTEAQKAIKAKYPAINKKYEYLDHTADVQLHSWGDTLEEAFEQCAMAMFGYMTDTETVEPIDTIEIESEGDDLESLLFHFLDDWLFKFSADAFFVPREVKVLQLDRMRFTIRSIGWGEEFNLAKHPQGTEVKAITYSAMQICDKEKPEIFAIIDI.

The Ca(2+) site is built by Asp34, Asp161, and Ile162.

This sequence belongs to the archease family. In terms of assembly, component of the tRNA-splicing ligase complex.

Component of the tRNA-splicing ligase complex required to facilitate the enzymatic turnover of catalytic subunit RTCB. Together with ddx1, acts by facilitating the guanylylation of RTCB, a key intermediate step in tRNA ligation. In Ictalurus punctatus (Channel catfish), this protein is Protein archease.